A 300-amino-acid chain; its full sequence is Small ribosomal subunit protein uS2 (300 aa).

The tract at residues 278–300 (GEAQTGNEGWGTEAAAPAATTQW) is disordered.

This sequence belongs to the universal ribosomal protein uS2 family. As to quaternary structure, component of the small ribosomal subunit. Mature ribosomes consist of a small (40S) and a large (60S) subunit. The 40S subunit contains about 33 different proteins and 1 molecule of RNA (18S). The 60S subunit contains about 49 different proteins and 3 molecules of RNA (25S, 5.8S and 5S). Interacts with rps21.

It is found in the cytoplasm. Functionally, required for the assembly and/or stability of the 40S ribosomal subunit. Required for the processing of the 20S rRNA-precursor to mature 18S rRNA in a late step of the maturation of 40S ribosomal subunits. In Pyrenophora tritici-repentis (strain Pt-1C-BFP) (Wheat tan spot fungus), this protein is Small ribosomal subunit protein uS2 (rps0).